Reading from the N-terminus, the 312-residue chain is Photosystem I assembly protein Ycf4 (312 aa).

Transmembrane regions (helical) follow at residues 42–62, 91–111, and 113–133; these read WAFI…SSYF, IILF…GLFL, and FYLW…IYIY.

The protein belongs to the Ycf4 family.

Its subcellular location is the plastid. It localises to the chloroplast thylakoid membrane. In terms of biological role, seems to be required for the assembly of the photosystem I complex. The protein is Photosystem I assembly protein Ycf4 of Pleurastrum terricola (Filamentous green alga).